A 303-amino-acid polypeptide reads, in one-letter code: Coenzyme PQQ synthesis protein B (303 aa).

Belongs to the PqqB family.

The protein operates within cofactor biosynthesis; pyrroloquinoline quinone biosynthesis. Functionally, may be involved in the transport of PQQ or its precursor to the periplasm. This is Coenzyme PQQ synthesis protein B from Pseudomonas putida (strain W619).